Here is a 421-residue protein sequence, read N- to C-terminus: Cyclin-A1 (421 aa).

The tract at residues 1–21 (MHRQSSKSGVALPPVGQGPDA) is disordered.

The protein belongs to the cyclin family. Cyclin AB subfamily. Interacts with INCA1 and KLHDC9. Interacts with the CDK2 and CDC2 protein kinases to form a serine/threonine kinase holoenzyme complex. The cyclin subunit imparts substrate specificity to the complex. Found in a complex with CDK2, CABLES1 and CCNE1. Polyubiquitinated via 'Lys-11'-linked ubiquitin by the anaphase-promoting complex (APC/C), leading to its degradation by the proteasome. Deubiquitinated and stabilized by USP37 enables entry into S phase. Ubiquitinated during the G1 phase by the SCF(FBXO31) complex, leading to its proteasomal degradation. Testis and ovaries.

It is found in the nucleus. It localises to the cytoplasm. The protein resides in the cytoskeleton. The protein localises to the spindle. May be involved in the control of the cell cycle at the G1/S (start) and G2/M (mitosis) transitions. May primarily function in the control of the germline meiotic cell cycle and additionally in the control of mitotic cell cycle in some somatic cells. This chain is Cyclin-A1 (Ccna1), found in Mus musculus (Mouse).